The primary structure comprises 785 residues: Transcription factor Sp1 (785 aa).

The interval 1 to 93 is disordered; that stretch reads MSDQDHSMDE…PSQSGGTGEL (93 aa). Serine 2 bears the N-acetylserine mark. Phosphoserine occurs at positions 2 and 7. Residues 2–82 form a repressor domain region; sequence SDQDHSMDEM…SPNENSNNSQ (81 aa). Lysine 16 participates in a covalent cross-link: Glycyl lysine isopeptide (Lys-Gly) (interchain with G-Cter in SUMO); alternate. Residue lysine 16 forms a Glycyl lysine isopeptide (Lys-Gly) (interchain with G-Cter in SUMO2); alternate linkage. Residues 20–34 show a composition bias toward gly residues; sequence GVGGNNGGNGNGGGA. Serine 59 carries the phosphoserine modification. Over residues 72-85 the composition is skewed to low complexity; the sequence is ESPNENSNNSQGPS. Serine 101 is subject to Phosphoserine; by ATM. Residues 109–123 show a composition bias toward polar residues; sequence IISSSSGATPTSKEQ. Residues 109–141 form a disordered region; the sequence is IISSSSGATPTSKEQSGSSTNGSNGSESSKNRT. Residues 124–136 are compositionally biased toward low complexity; sequence SGSSTNGSNGSES. The segment at 146–251 is transactivation domain A (Gln-rich); it reads QYVVAAAPNL…ANNVLSGQTQ (106 aa). A transactivation domain B (Gln-rich) region spans residues 261–495; the sequence is NGNITLLPVN…PMQGVSLGQT (235 aa). At threonine 278 the chain carries Phosphothreonine; by MAPK8. The segment at 329 to 395 is disordered; the sequence is TTTTTSNMGI…KEGEQNQQTQ (67 aa). The span at 342–357 shows a compositional bias: low complexity; that stretch reads TTSGSSGTNSQGQTPQ. A compositionally biased stretch (polar residues) spans 358–379; it reads RVSGLQGSDALNIQQNQTSGGS. Over residues 381 to 395 the composition is skewed to low complexity; the sequence is QAGQQKEGEQNQQTQ. A Phosphothreonine; by MAPK1 and MAPK3 modification is found at threonine 453. The short motif at 462–470 is the 9aaTAD element; that stretch reads VSWQTLQLQ. Residue serine 491 is glycosylated (O-linked (GlcNAc) serine). A transactivation domain C (highly charged) region spans residues 496–610; sequence SSSNTTLTPI…REACTCPYCK (115 aa). Residues 567–598 form a disordered region; the sequence is LHGAGGDGIHDDTAGGEEGENSPDAQPQAGRR. Serine 612 is subject to Phosphoserine; alternate. The O-linked (GlcNAc) serine; alternate glycan is linked to serine 612. Positions 619–785 are VZV IE62-binding; that stretch reads DPGKKKQHIC…QSINISGNGF (167 aa). Residues 626 to 650 form a C2H2-type 1 zinc finger; the sequence is HICHIQGCGKVYGKTSHLRAHLRWH. Position 640 is a phosphothreonine; alternate (threonine 640). Threonine 640 carries an O-linked (GlcNAc) threonine; alternate glycan. O-linked (GlcNAc) serine; alternate glycosylation occurs at serine 641. Residue serine 641 is modified to Phosphoserine; by PKC/PRKCZ; alternate. Position 651 is a phosphothreonine; by PKC/PRKCZ (threonine 651). The C2H2-type 2 zinc-finger motif lies at 656-680; sequence FMCTWSYCGKRFTRSDELQRHKRTH. Residue threonine 668 is modified to Phosphothreonine. The residue at position 670 (serine 670) is a Phosphoserine; by PKC/PRKCZ. Threonine 681 bears the Phosphothreonine; by PKC/PRKCZ mark. A C2H2-type 3 zinc finger spans residues 686–708; sequence FACPECPKRFMRSDHLSKHIKTH. A phosphoserine; alternate mark is found at serine 698 and serine 702. Residues serine 698 and serine 702 are each glycosylated (O-linked (GlcNAc) serine; alternate). An N6-acetyllysine modification is found at lysine 703. The tract at residues 708 to 785 is domain D; sequence HQNKKGGPGV…QSINISGNGF (78 aa). At threonine 739 the chain carries Phosphothreonine; by MAPK1, MAPK3 and MAPK8.

The protein belongs to the Sp1 C2H2-type zinc-finger protein family. Interacts with ATF7IP, ATF7IP2, BAHD1, POGZ, HCFC1, AATF and PHC2. Interacts with HLTF; the interaction may be required for basal transcriptional activity of HLTF. Interacts (deacetylated form) with EP300; the interaction enhances gene expression. Interacts with HDAC1 and JUN. Interacts with ELF1; the interaction is inhibited by glycosylation of SP1. Interaction with NFYA; the interaction is inhibited by glycosylation of SP1. Interacts with ATF7IP and TBP. Interacts with MEIS2 isoform 4 and PBX1 isoform PBX1a. Interacts with EGR1. Interacts with SMARCA4/BRG1. Interacts with RNF112 in an oxidative stress-regulated manner. Interacts with ZBTB7A; ZBTB7A prevents the binding to GC-rich motifs in promoters and represses the transcriptional activity of SP1. Interacts with DDX3X; this interaction potentiates SP1-induced CDKN1A/WAF1/CIP1 transcription. Interacts with MSX1; the interaction may inhibit MSX1 autoinactivation. As to quaternary structure, (Microbial infection) Interacts with varicella-zoster virus IE62 protein. In terms of assembly, (Microbial infection) Interacts with SV40 VP2/3 proteins. Interacts with SV40 major capsid protein VP1; this interaction leads to a cooperativity between the 2 proteins in DNA binding. (Microbial infection) Interacts with HIV-1 Vpr; the interaction is inhibited by SP1 O-glycosylation. In terms of processing, phosphorylated on multiple serine and threonine residues. Phosphorylation is coupled to ubiquitination, sumoylation and proteolytic processing. Phosphorylation on Ser-59 enhances proteolytic cleavage. Phosphorylation on Ser-7 enhances ubiquitination and protein degradation. Hyperphosphorylation on Ser-101 in response to DNA damage has no effect on transcriptional activity. MAPK1/MAPK3-mediated phosphorylation on Thr-453 and Thr-739 enhances VEGF transcription but, represses FGF2-triggered PDGFR-alpha transcription. Also implicated in the repression of RECK by ERBB2. Hyperphosphorylated on Thr-278 and Thr-739 during mitosis by MAPK8 shielding SP1 from degradation by the ubiquitin-dependent pathway. Phosphorylated in the zinc-finger domain by calmodulin-activated PKCzeta. Phosphorylation on Ser-641 by PKCzeta is critical for TSA-activated LHR gene expression through release of its repressor, p107. Phosphorylation on Thr-668, Ser-670 and Thr-681 is stimulated by angiotensin II via the AT1 receptor inducing increased binding to the PDGF-D promoter. This phosphorylation is increased in injured artey wall. Ser-59 and Thr-681 can both be dephosphorylated by PP2A during cell-cycle interphase. Dephosphorylation on Ser-59 leads to increased chromatin association during interphase and increases the transcriptional activity. On insulin stimulation, sequentially glycosylated and phosphorylated on several C-terminal serine and threonine residues. Acetylated. Acetylation/deacetylation events affect transcriptional activity. Deacetylation leads to an increase in the expression of the 12(s)-lipooxygenase gene through recruitment of p300 to the promoter. Deacetylated by HDAC6 which leads to increased expression of ENG and positive regulation of angiogenesis. Post-translationally, ubiquitinated. Ubiquitination occurs on the C-terminal proteolytically-cleaved peptide and is triggered by phosphorylation. In terms of processing, sumoylated with SUMO1. Sumoylation modulates proteolytic cleavage of the N-terminal repressor domain. Sumoylation levels are attenuated during tumorigenesis. Phosphorylation mediates SP1 desumoylation. Proteolytic cleavage in the N-terminal repressor domain is prevented by sumoylation. The C-terminal cleaved product is susceptible to degradation. Post-translationally, O-glycosylated; Contains 8 N-acetylglucosamine side chains. Levels are controlled by insulin and the SP1 phosphorylation states. Insulin-mediated O-glycosylation locates SP1 to the nucleus, where it is sequentially deglycosylated and phosphorylated. O-glycosylation affects transcriptional activity through disrupting the interaction with a number of transcription factors including ELF1 and NFYA. Also inhibits interaction with the HIV1 promoter. Inhibited by peroxisomome proliferator receptor gamma (PPARgamma). In terms of tissue distribution, up-regulated in adenocarcinomas of the stomach (at protein level). Isoform 3 is ubiquitously expressed at low levels.

Its subcellular location is the nucleus. The protein localises to the cytoplasm. In terms of biological role, transcription factor that can activate or repress transcription in response to physiological and pathological stimuli. Binds with high affinity to GC-rich motifs and regulates the expression of a large number of genes involved in a variety of processes such as cell growth, apoptosis, differentiation and immune responses. Highly regulated by post-translational modifications (phosphorylations, sumoylation, proteolytic cleavage, glycosylation and acetylation). Also binds the PDGFR-alpha G-box promoter. May have a role in modulating the cellular response to DNA damage. Implicated in chromatin remodeling. Plays an essential role in the regulation of FE65 gene expression. In complex with ATF7IP, maintains telomerase activity in cancer cells by inducing TERT and TERC gene expression. Isoform 3 is a stronger activator of transcription than isoform 1. Positively regulates the transcription of the core clock component BMAL1. Plays a role in the recruitment of SMARCA4/BRG1 on the c-FOS promoter. Plays a role in protecting cells against oxidative stress following brain injury by regulating the expression of RNF112. This chain is Transcription factor Sp1 (SP1), found in Homo sapiens (Human).